The following is a 104-amino-acid chain: Large ribosomal subunit protein bL21 (104 aa).

This sequence belongs to the bacterial ribosomal protein bL21 family. In terms of assembly, part of the 50S ribosomal subunit. Contacts protein L20.

Functionally, this protein binds to 23S rRNA in the presence of protein L20. This Symbiobacterium thermophilum (strain DSM 24528 / JCM 14929 / IAM 14863 / T) protein is Large ribosomal subunit protein bL21.